Here is a 561-residue protein sequence, read N- to C-terminus: MKKKVVLLTLLSCFSTSGLSANETGNLGSISESRRALQDSQREINQLIEQNRYQQLQEKAVNISPTPTLITESEHCLPIKGVYIQGITLLTEKDLNSLSPLPDQCIKSADINRLVKELTQRYLQHGYITARIQFLRPNQHGELGLYAIEGFVERIEGGDRGVNTTLLFPRIKGQPLKLATLDQGLDQANRLQSNKVTVDILPGTELGGSVIKLSNQRKSPWHLNIASDNYGQKNSGRWLIRTNASLDSPLGLSDFVSLNANITTDNPNTRFNRAYTLLYSIPYGGFTFSSFGSYSEYQFHQKLQTRTVNLYGDTTQVGIRGDYAFSRSQKQIDTLNIQVTHKRIRNYFSQIRLDLSSPKLTTIELGINHLQIIPNGVLSTNLSVEKAVGWFGAEETPYIANGNGNDYRFTKVKLFTNWYQRFSLWHSTFLFNSTFLGQYSHDTLPGVEWLSLTDKNAIRGFDQSTLSGDNGGYLRNTLSYPYRLNHFSITPRIGVDIGQVKQHGNYKGWQGGYGLSSGLNIQYQQAQLDLEVAKGELLYHQTNSNKTKDPTQLLVKFSYLF.

An N-terminal signal peptide occupies residues 1–17; sequence MKKKVVLLTLLSCFSTS. The 74-residue stretch at 77 to 150 folds into the POTRA domain; that stretch reads LPIKGVYIQG…GELGLYAIEG (74 aa).

The protein belongs to the TPS (TC 1.B.20) family.

The protein localises to the cell outer membrane. Its function is as follows. Interacts with the cell-bound hemolysin. Necessary for the extracellular secretion and activation of the hemolysin. In terms of biological role, probable member of a two partner secretion pathway (TPS) in which it mediates the secretion of hemolysin. This Proteus mirabilis protein is Hemolysin transporter protein HpmB (hpmB).